The primary structure comprises 375 residues: Erythronate-4-phosphate dehydrogenase (375 aa).

Residues Ser45 and Thr66 each contribute to the substrate site. Residues Asp146, Thr175, 206 to 208 (ASR), and Asp232 contribute to the NAD(+) site. Arg208 is a catalytic residue. Glu237 is an active-site residue. His254 (proton donor) is an active-site residue. Residue Gly257 coordinates NAD(+). Tyr258 is a substrate binding site.

It belongs to the D-isomer specific 2-hydroxyacid dehydrogenase family. PdxB subfamily. As to quaternary structure, homodimer.

It localises to the cytoplasm. The enzyme catalyses 4-phospho-D-erythronate + NAD(+) = (R)-3-hydroxy-2-oxo-4-phosphooxybutanoate + NADH + H(+). It participates in cofactor biosynthesis; pyridoxine 5'-phosphate biosynthesis; pyridoxine 5'-phosphate from D-erythrose 4-phosphate: step 2/5. Functionally, catalyzes the oxidation of erythronate-4-phosphate to 3-hydroxy-2-oxo-4-phosphonooxybutanoate. The chain is Erythronate-4-phosphate dehydrogenase from Photorhabdus laumondii subsp. laumondii (strain DSM 15139 / CIP 105565 / TT01) (Photorhabdus luminescens subsp. laumondii).